Here is a 363-residue protein sequence, read N- to C-terminus: NAD(P)H-quinone oxidoreductase subunit 1, chloroplastic (363 aa).

6 helical membrane passes run 26 to 46, 98 to 118, 127 to 147, 253 to 273, 300 to 320, and 336 to 356; these read IIWV…GVLV, FSIG…VIPF, LSIG…GLLM, FGLF…FVTV, VFGT…FLFI, and LLNL…LLTT.

Belongs to the complex I subunit 1 family. In terms of assembly, NDH is composed of at least 16 different subunits, 5 of which are encoded in the nucleus.

It localises to the plastid. The protein localises to the chloroplast thylakoid membrane. The enzyme catalyses a plastoquinone + NADH + (n+1) H(+)(in) = a plastoquinol + NAD(+) + n H(+)(out). The catalysed reaction is a plastoquinone + NADPH + (n+1) H(+)(in) = a plastoquinol + NADP(+) + n H(+)(out). In terms of biological role, NDH shuttles electrons from NAD(P)H:plastoquinone, via FMN and iron-sulfur (Fe-S) centers, to quinones in the photosynthetic chain and possibly in a chloroplast respiratory chain. The immediate electron acceptor for the enzyme in this species is believed to be plastoquinone. Couples the redox reaction to proton translocation, and thus conserves the redox energy in a proton gradient. The polypeptide is NAD(P)H-quinone oxidoreductase subunit 1, chloroplastic (Helianthus annuus (Common sunflower)).